Reading from the N-terminus, the 226-residue chain is Probable functional amyloid protease FapD (226 aa).

The N-terminal stretch at 1–18 is a signal peptide; the sequence is MRRATLCLLLLLAGPSWA. The region spanning 50-180 is the Peptidase C39 domain; it reads QKTDFSCGAA…AGWNGIVFAV (131 aa). Residue cysteine 56 is part of the active site.

This sequence belongs to the FapD family.

It localises to the periplasm. Functionally, probable cysteine protease that is involved in processing fibril precursors. Upon overexpression of the endogenous six-gene locus (fapA-fapF) in situ, cells form large clumps during liquid growth, make large amounts of biofilm and produce amyloid fibrils. Expression of the 6 gene operon in E.coli strain BL21(DE3) induces flocculation and biofilm formation with copious extracellular fibrils. The chain is Probable functional amyloid protease FapD from Pseudomonas fluorescens.